The following is a 737-amino-acid chain: Catalase-peroxidase (737 aa).

The first 23 residues, 1–23, serve as a signal peptide directing secretion; it reads MLKKILPVLITLAIVHNTPTAWA. The segment at residues 102–223 is a cross-link (tryptophyl-tyrosyl-methioninium (Trp-Tyr) (with M-249)); it reads WHGAGTYRIY…LAATQMGLIY (122 aa). His-103 acts as the Proton acceptor in catalysis. The tryptophyl-tyrosyl-methioninium (Tyr-Met) (with W-102) cross-link spans 223 to 249; the sequence is YVNPEGPNGKPDPVAAAKDIREAFARM. Residue His-264 coordinates heme b.

Belongs to the peroxidase family. Peroxidase/catalase subfamily. In terms of assembly, homodimer or homotetramer. It depends on heme b as a cofactor. In terms of processing, formation of the three residue Trp-Tyr-Met cross-link is important for the catalase, but not the peroxidase activity of the enzyme.

It carries out the reaction H2O2 + AH2 = A + 2 H2O. The enzyme catalyses 2 H2O2 = O2 + 2 H2O. In terms of biological role, bifunctional enzyme with both catalase and broad-spectrum peroxidase activity. This Yersinia pseudotuberculosis serotype I (strain IP32953) protein is Catalase-peroxidase.